The sequence spans 471 residues: Probable ribonuclease FAU-1 (471 aa).

An S1 motif domain is found at 93–139 (GAVFDAAVDHTVGGGAILDLGDDREAYLPFGAVDDHVTDGDTLRVAI).

This sequence belongs to the FAU-1 family.

Functionally, probable RNase involved in rRNA stability through maturation and/or degradation of precursor rRNAs. Binds to RNA in loop regions with AU-rich sequences. This chain is Probable ribonuclease FAU-1, found in Halobacterium salinarum (strain ATCC 29341 / DSM 671 / R1).